Here is a 100-residue protein sequence, read N- to C-terminus: Gas vesicle protein J (100 aa).

Belongs to the gas vesicle GvpA family. In terms of assembly, interacts with GvpA.

It localises to the gas vesicle. Its function is as follows. A minor component of the gas vesicle, might be involved in nucleating gas vesicle formation. This protein could be important for the shape determination of the gas vesicle. Gas vesicles (GV) are hollow, gas filled proteinaceous nanostructures. During planktonic growth they allow positioning of the organism at a favorable depth for light or nutrient acquisition. When a minimal gvp locus (gvpA2-gvpR-gvpN-gvpF-gvpG-gvpL-gvpS-gvpK-gvpJ-gvpT-gvpU, called pNL29) is expressed in E.coli gas vesicles are made. The polypeptide is Gas vesicle protein J (Priestia megaterium (Bacillus megaterium)).